The chain runs to 232 residues: Ribonuclease 3 (232 aa).

The 130-residue stretch at 5 to 134 (QTVLKNHFAI…FLGALLLDKD (130 aa)) folds into the RNase III domain. E47 contributes to the Mg(2+) binding site. D51 is an active-site residue. 2 residues coordinate Mg(2+): D120 and E123. Residue E123 is part of the active site. Residues 160 to 229 (DYKTHLQELL…AKNAVEKGLD (70 aa)) form the DRBM domain.

Belongs to the ribonuclease III family. In terms of assembly, homodimer. The cofactor is Mg(2+).

The protein localises to the cytoplasm. The enzyme catalyses Endonucleolytic cleavage to 5'-phosphomonoester.. Digests double-stranded RNA. Involved in the processing of primary rRNA transcript to yield the immediate precursors to the large and small rRNAs (23S and 16S). Processes some mRNAs, and tRNAs when they are encoded in the rRNA operon. Processes pre-crRNA and tracrRNA of type II CRISPR loci if present in the organism. The protein is Ribonuclease 3 of Streptococcus pneumoniae (strain P1031).